We begin with the raw amino-acid sequence, 809 residues long: Cyclic nucleotide-gated channel beta-3 (809 aa).

2 disordered regions span residues 1–121 and 153–178; these read MFKS…PPAA and GDLS…ESDD. The Cytoplasmic segment spans residues 1 to 218; the sequence is MFKSLTKVNK…SIDSYTDRLY (218 aa). A compositionally biased stretch (basic and acidic residues) spans 22-31; the sequence is QSSRRNEEGS. Residues 32–43 are compositionally biased toward polar residues; it reads HPSNQSQQTTAQ. Positions 44 to 53 are enriched in basic and acidic residues; that stretch reads EENKGEEKSL. The segment covering 55–88 has biased composition (polar residues); sequence TKSTPVTSEEPHTNIQDKLSKKNSSGDLTTNPDP. A helical membrane pass occupies residues 219–242; sequence LLWLLLVTLAYNWNCCFIPLRLVF. Topologically, residues 243 to 249 are extracellular; that stretch reads PYQTADN. Residues 250–270 traverse the membrane as a helical segment; the sequence is IHYWLIADIICDIIYLYDMLF. The Cytoplasmic segment spans residues 271–299; sequence IQPRLQFVRGGDIIVDSNELRKHYRTSTK. Residues 300 to 317 form a helical membrane-spanning segment; the sequence is FQLDVASIIPFDICYLFF. Residues 318–320 lie on the Extracellular side of the membrane; it reads GFN. A helical transmembrane segment spans residues 321–335; the sequence is PMFRANRMLKYTSFF. Over 336–348 the chain is Cytoplasmic; the sequence is EFNHHLESIMDKA. The tract at residues 348 to 447 is ion conduction pathway; it reads AYIYRVIRTT…IGQMRDVIGA (100 aa). A helical transmembrane segment spans residues 349–371; that stretch reads YIYRVIRTTGYLLFILHINACVY. Over 372–393 the chain is Extracellular; sequence YWASNYEGIGTTRWVYDGEGNE. Helical transmembrane passes span 394-420 and 421-445; these read YLRC…LFEI and VFQL…RDVI. Residues 407-410 are selectivity filter; sequence TIGG. Residues 446–809 are Cytoplasmic-facing; the sequence is GAATANQNYF…TIEVKEKAKQ (364 aa). Positions 450 to 526 are C-linker; sequence ANQNYFRACM…SIISKVDLFK (77 aa). The tract at residues 530–646 is cyclic nucleotide-binding domain; that stretch reads TQMIYDMLLR…ILMKKARVLL (117 aa). 3',5'-cyclic GMP is bound by residues Gly591, Glu592, Arg604, and Thr605. A disordered region spans residues 698-776; it reads QAAQKKENSE…PHSVRRTVLP (79 aa). Residues 716 to 755 show a composition bias toward basic and acidic residues; sequence NEDKQKENEDKQKENEDKGKENEDKDKGREPEEKPLDRPE.

This sequence belongs to the cyclic nucleotide-gated cation channel (TC 1.A.1.5) family. CNGB3 subfamily. Forms heterotetrameric channels composed of CNGA3 and CNGB3 subunits with 3:1 stoichiometry. Expressed specifically in the retina.

Its subcellular location is the cell membrane. It catalyses the reaction Ca(2+)(in) = Ca(2+)(out). The catalysed reaction is Na(+)(in) = Na(+)(out). It carries out the reaction K(+)(in) = K(+)(out). The enzyme catalyses NH4(+)(in) = NH4(+)(out). It catalyses the reaction Rb(+)(in) = Rb(+)(out). The catalysed reaction is Li(+)(in) = Li(+)(out). It carries out the reaction Cs(+)(in) = Cs(+)(out). Pore-forming subunit of the cone cyclic nucleotide-gated channel. Mediates cone photoresponses at bright light converting transient changes in intracellular cGMP levels into electrical signals. In the dark, cGMP levels are high and keep the channel open enabling a steady inward current carried by Na(+) and Ca(2+) ions that leads to membrane depolarization and neurotransmitter release from synaptic terminals. Upon photon absorption cGMP levels decline leading to channel closure and membrane hyperpolarization that ultimately slows neurotransmitter release and signals the presence of light, the end point of the phototransduction cascade. Conducts cGMP- and cAMP-gated ion currents, with permeability for monovalent and divalent cations. This Homo sapiens (Human) protein is Cyclic nucleotide-gated channel beta-3.